Consider the following 327-residue polypeptide: METKTVAITMGDPAGIGPEIIVKALSEDGLNGAPLVVIGCLATLKCLQAKGITPNVELRAIERVAEARFAPGIIHVIDEPLAQPEALEAGKVQAQAGDLAYRCVKRATELALRGDVQAIATAPLNKEALHLAGHNYPGHTELLATLTHSRDYAMVLYTDKLKVIHVSTHIALRKFLDTLSTTRVETVIGIADTFLKRVGYVKPRIAVAGVNPHAGENGLFGDEETRILTPAITDARAKGMDVYGPCPPDTVFLQAYEGQYDMVVAMYHDQGHIPLKLLGFYDGVNITAGLPFIRTSADHGTAFDIAWTGKAKSESMAVSIKLAMQLA.

Positions 139 and 140 each coordinate substrate. A divalent metal cation is bound by residues H169, H213, and H268. Substrate is bound by residues K276, N285, and R294.

The protein belongs to the PdxA family. PdxA2 subfamily. As to quaternary structure, homodimer. A divalent metal cation serves as cofactor.

The enzyme catalyses 4-O-phospho-D-threonate + NAD(+) = dihydroxyacetone phosphate + CO2 + NADH. Functionally, catalyzes the NAD-dependent oxidation and subsequent decarboxylation of D-threonate 4-phosphate to produce dihydroxyacetone phosphate (DHAP). This Salmonella typhi protein is Putative D-threonate 4-phosphate dehydrogenase.